A 68-amino-acid chain; its full sequence is Conotoxin Cal14.13a (68 aa).

The first 21 residues, 1-21 (MKLCVVIVLLMLAMPFNGGEA), serve as a signal peptide directing secretion. The propeptide occupies 22–38 (SRFFNQHARSQRSGMKT). Position 66 is a valine amide (Val-66).

Contains 2 disulfide bonds. In terms of tissue distribution, expressed by the venom duct.

It localises to the secreted. In terms of biological role, probable neurotoxin with unknown target. Possibly targets ion channels. The chain is Conotoxin Cal14.13a from Californiconus californicus (California cone).